The sequence spans 476 residues: Cysteine--tRNA ligase (476 aa).

A Zn(2+)-binding site is contributed by C29. The short motif at 31 to 41 (PTVYDYTHIGH) is the 'HIGH' region element. Zn(2+) contacts are provided by C209, H234, and E238. Residues 266–270 (KMSKS) carry the 'KMSKS' region motif. Residue K269 coordinates ATP.

It belongs to the class-I aminoacyl-tRNA synthetase family. The cofactor is Zn(2+).

Its subcellular location is the cytoplasm. It carries out the reaction tRNA(Cys) + L-cysteine + ATP = L-cysteinyl-tRNA(Cys) + AMP + diphosphate. The polypeptide is Cysteine--tRNA ligase (Thermococcus kodakarensis (strain ATCC BAA-918 / JCM 12380 / KOD1) (Pyrococcus kodakaraensis (strain KOD1))).